Consider the following 79-residue polypeptide: Raniseptin-9 (79 aa).

An N-terminal signal peptide occupies residues 1-22 (MAFLKKSLFLVLFLGIVSLSIC). A propeptide spanning residues 23 to 49 (EEEKREGEEEEKQEEENEELSEEELRE) is cleaved from the precursor. The interval 27 to 46 (REGEEEEKQEEENEELSEEE) is disordered. Residues 30-44 (EEEEKQEEENEELSE) show a composition bias toward acidic residues.

Belongs to the frog skin active peptide (FSAP) family. Dermaseptin subfamily. As to expression, expressed by the skin glands.

It is found in the secreted. Functionally, has antibacterial activity. In Boana raniceps (Chaco tree frog), this protein is Raniseptin-9.